Here is a 361-residue protein sequence, read N- to C-terminus: 3-dehydroquinate synthase (361 aa).

Residues 73 to 78 (DAEAGK), 107 to 111 (GAATD), 131 to 132 (TT), Lys144, Lys153, and 171 to 174 (TLET) each bind NAD(+). Residues Glu186, His249, and His265 each coordinate Zn(2+).

This sequence belongs to the sugar phosphate cyclases superfamily. Dehydroquinate synthase family. Requires NAD(+) as cofactor. Co(2+) serves as cofactor. It depends on Zn(2+) as a cofactor.

Its subcellular location is the cytoplasm. It carries out the reaction 7-phospho-2-dehydro-3-deoxy-D-arabino-heptonate = 3-dehydroquinate + phosphate. Its pathway is metabolic intermediate biosynthesis; chorismate biosynthesis; chorismate from D-erythrose 4-phosphate and phosphoenolpyruvate: step 2/7. Functionally, catalyzes the conversion of 3-deoxy-D-arabino-heptulosonate 7-phosphate (DAHP) to dehydroquinate (DHQ). This chain is 3-dehydroquinate synthase, found in Mycobacterium leprae (strain TN).